Consider the following 388-residue polypeptide: ATP phosphoribosyltransferase regulatory subunit (388 aa).

This sequence belongs to the class-II aminoacyl-tRNA synthetase family. HisZ subfamily. In terms of assembly, heteromultimer composed of HisG and HisZ subunits.

The protein resides in the cytoplasm. Its pathway is amino-acid biosynthesis; L-histidine biosynthesis; L-histidine from 5-phospho-alpha-D-ribose 1-diphosphate: step 1/9. Required for the first step of histidine biosynthesis. May allow the feedback regulation of ATP phosphoribosyltransferase activity by histidine. In Acinetobacter baumannii (strain SDF), this protein is ATP phosphoribosyltransferase regulatory subunit.